A 934-amino-acid chain; its full sequence is Bifunctional uridylyltransferase/uridylyl-removing enzyme (934 aa).

Positions M1–S379 are uridylyltransferase. A uridylyl-removing region spans residues D380–T736. Residues V496–M613 enclose the HD domain. 2 ACT domains span residues E737–A818 and V848–Q931.

This sequence belongs to the GlnD family. Mg(2+) serves as cofactor.

It carries out the reaction [protein-PII]-L-tyrosine + UTP = [protein-PII]-uridylyl-L-tyrosine + diphosphate. The enzyme catalyses [protein-PII]-uridylyl-L-tyrosine + H2O = [protein-PII]-L-tyrosine + UMP + H(+). Uridylyltransferase (UTase) activity is inhibited by glutamine, while glutamine activates uridylyl-removing (UR) activity. In terms of biological role, modifies, by uridylylation and deuridylylation, the PII regulatory proteins (GlnB and homologs), in response to the nitrogen status of the cell that GlnD senses through the glutamine level. Under low glutamine levels, catalyzes the conversion of the PII proteins and UTP to PII-UMP and PPi, while under higher glutamine levels, GlnD hydrolyzes PII-UMP to PII and UMP (deuridylylation). Thus, controls uridylylation state and activity of the PII proteins, and plays an important role in the regulation of nitrogen assimilation and metabolism. This is Bifunctional uridylyltransferase/uridylyl-removing enzyme from Brucella abortus (strain S19).